The chain runs to 303 residues: Dipeptide transport system permease protein DppB (303 aa).

A run of 7 helical transmembrane segments spans residues 9–29 (LGLLLLTLFLIVTLTFFMMQV), 62–82 (YFIYVGHMFTGNFGTSFIYTN), 93–113 (LPVSMQLGTQALILGTVLGAL), 129–149 (IFGFLSVLGISVPSFVIGTLI), 166–186 (GTFSQTIMPTIALSFAPMAVV), 227–247 (IPMLTLIGPMAAGLLTGSVLI), and 269–289 (FPVIMATTIVYAVILMVFILV). The 198-residue stretch at 93-290 (LPVSMQLGTQ…VILMVFILVT (198 aa)) folds into the ABC transmembrane type-1 domain.

The protein belongs to the binding-protein-dependent transport system permease family. OppBC subfamily. In terms of assembly, the complex is composed of two ATP-binding proteins (DppD and DppF), two transmembrane proteins (DppB and DppC) and a solute-binding protein (DppA).

The protein localises to the cell membrane. Part of the ABC transporter DppABCDF involved in dipeptide transport. Responsible for the translocation of the substrate across the membrane. The protein is Dipeptide transport system permease protein DppB of Lactococcus lactis subsp. cremoris (strain MG1363).